A 479-amino-acid chain; its full sequence is uncharacterized protein (479 aa).

Helical transmembrane passes span 25–45, 63–83, 110–130, 133–153, 175–195, 229–249, 287–307, and 328–348; these read VVFVAIMGYLLFKNLLFLFFF, IAMIIAVAVSIVLVLMALAGG, LFGPIVGIFSAATIDFLTVIF, GVFNVGYVLGAILTGMIAGIL, VLSIGMVIAAFLITQFFVLGI, ILLYFTIAIVIAMLVLYIVWL, LILNVITLASTSLLMINIAFI, and LFAPVIFLLDIIVIYPILLLL.

The protein in the C-terminal section; belongs to the GatC family.

It is found in the cell membrane. This is an uncharacterized protein from Mycoplasma pneumoniae (strain ATCC 29342 / M129 / Subtype 1) (Mycoplasmoides pneumoniae).